Here is a 569-residue protein sequence, read N- to C-terminus: Sulfite reductase [NADPH] hemoprotein beta-component (569 aa).

Residues Cys433, Cys439, Cys478, and Cys482 each coordinate [4Fe-4S] cluster. Cys482 provides a ligand contact to siroheme.

Belongs to the nitrite and sulfite reductase 4Fe-4S domain family. Alpha(8)-beta(8). The alpha component is a flavoprotein, the beta component is a hemoprotein. Siroheme is required as a cofactor. It depends on [4Fe-4S] cluster as a cofactor.

The enzyme catalyses hydrogen sulfide + 3 NADP(+) + 3 H2O = sulfite + 3 NADPH + 4 H(+). Its pathway is sulfur metabolism; hydrogen sulfide biosynthesis; hydrogen sulfide from sulfite (NADPH route): step 1/1. Functionally, component of the sulfite reductase complex that catalyzes the 6-electron reduction of sulfite to sulfide. This is one of several activities required for the biosynthesis of L-cysteine from sulfate. The polypeptide is Sulfite reductase [NADPH] hemoprotein beta-component (Blochmanniella floridana).